The sequence spans 354 residues: Variable large protein 15/16 (354 aa).

An N-terminal signal peptide occupies residues 1-18 (MRKRISAIIMTLFMVLVS). A lipid anchor (N-palmitoyl cysteine) is attached at Cys-19. A lipid anchor (S-diacylglycerol cysteine) is attached at Cys-19. Residues 333–354 (EDKSVEATNTAEATTSGQQAKN) form a disordered region. The span at 338–354 (EATNTAEATTSGQQAKN) shows a compositional bias: polar residues.

It belongs to the variable large protein (Vlp) family. Delta subfamily.

Its subcellular location is the cell outer membrane. The Vlp and Vsp proteins are antigenically distinct proteins, only one vlp or vsp gene is transcriptionally active at any one time. Switching between these genes is a mechanism of host immune response evasion. The protein is Variable large protein 15/16 of Borrelia hermsii.